The primary structure comprises 200 residues: Large ribosomal subunit protein bL25 (200 aa).

Disordered stretches follow at residues Met1 to Arg20 and Pro179 to Ala200.

The protein belongs to the bacterial ribosomal protein bL25 family. CTC subfamily. In terms of assembly, part of the 50S ribosomal subunit; part of the 5S rRNA/L5/L18/L25 subcomplex. Contacts the 5S rRNA. Binds to the 5S rRNA independently of L5 and L18.

Functionally, this is one of the proteins that binds to the 5S RNA in the ribosome where it forms part of the central protuberance. The protein is Large ribosomal subunit protein bL25 of Azoarcus sp. (strain BH72).